Consider the following 210-residue polypeptide: Oxygen-insensitive NADPH nitroreductase (210 aa).

150-155 (GVSLMG) provides a ligand contact to NADP(+).

This sequence belongs to the nitroreductase family.

Functionally, reduction of a variety of nitroaromatic compounds using NADPH as source of reducing equivalents; two electrons are transferred. Capable of reducing metronidazole; inactive RdxA renders the bacterium resistant to this compound. The reduction of metronidazole generates hydroxylamine, a potent mutagen and bactericide. The protein is Oxygen-insensitive NADPH nitroreductase (rdxA) of Helicobacter pylori (strain ATCC 700392 / 26695) (Campylobacter pylori).